The primary structure comprises 213 residues: Pyrrolidone-carboxylate peptidase (213 aa).

Catalysis depends on residues glutamate 81, cysteine 144, and histidine 166.

This sequence belongs to the peptidase C15 family. As to quaternary structure, homotetramer.

The protein localises to the cytoplasm. The enzyme catalyses Release of an N-terminal pyroglutamyl group from a polypeptide, the second amino acid generally not being Pro.. Functionally, removes 5-oxoproline from various penultimate amino acid residues except L-proline. The chain is Pyrrolidone-carboxylate peptidase from Pseudomonas fluorescens (strain SBW25).